The following is a 344-amino-acid chain: uncharacterized protein (344 aa).

The first 27 residues, 1–27 (MKKWLIIAVSLAIAIVLFMYTKGEAKA), serve as a signal peptide directing secretion. Residues 29–344 (GMTVGYTTGD…FWKAIRKGTK (316 aa)) enclose the GH18 domain. E140 acts as the Proton donor in catalysis.

This sequence belongs to the glycosyl hydrolase 18 family.

This is an uncharacterized protein from Bacillus subtilis (strain 168).